The primary structure comprises 262 residues: Tetrahydromethanopterin S-methyltransferase subunit C (262 aa).

The next 7 membrane-spanning stretches (helical) occupy residues 27-47 (LVGI…GGLL), 72-92 (PSIG…GVLI), 98-118 (LPVL…GFIV), 145-165 (ALAI…DIII), 173-193 (VIAL…NACI), 200-220 (KRTM…FAIA), and 222-242 (LDIV…GTFV).

The protein belongs to the MtrC family. The complex is composed of 8 subunits; MtrA, MtrB, MtrC, MtrD, MtrE, MtrF, MtrG and MtrH.

It is found in the cell membrane. The catalysed reaction is 5-methyl-5,6,7,8-tetrahydromethanopterin + coenzyme M + 2 Na(+)(in) = 5,6,7,8-tetrahydromethanopterin + methyl-coenzyme M + 2 Na(+)(out). Its pathway is one-carbon metabolism; methanogenesis from CO(2); methyl-coenzyme M from 5,10-methylene-5,6,7,8-tetrahydromethanopterin: step 2/2. In terms of biological role, part of a complex that catalyzes the formation of methyl-coenzyme M and tetrahydromethanopterin from coenzyme M and methyl-tetrahydromethanopterin. This is an energy-conserving, sodium-ion translocating step. In Methanococcus maripaludis (strain C5 / ATCC BAA-1333), this protein is Tetrahydromethanopterin S-methyltransferase subunit C.